The following is a 707-amino-acid chain: Ribosome biogenesis protein ENP2 (707 aa).

WD repeat units follow at residues 54–94, 178–217, 226–265, 269–310, and 312–351; these read EFSE…LKFD, LDTE…RVSK, NRPF…PSII, GYGF…AYAS, and EPSV…PSPR. Residues 523–707 form a disordered region; sequence LTAAEESDEE…RASKNAFRGM (185 aa). S529 is modified (phosphoserine). Basic and acidic residues predominate over residues 532 to 544; it reads ERIAMKDGRGHYD. Residues 545-558 are compositionally biased toward acidic residues; the sequence is YEDEESDEEESDDE. Phosphoserine is present on residues S550 and S555. 4 stretches are compositionally biased toward basic and acidic residues: residues 559-598, 629-647, 659-671, and 680-697; these read TNQK…RFMN, ENGK…RGEA, KDGN…HDNS, and NGNK…ENRR.

It belongs to the WD repeat NOL10/ENP2 family. Component of the 90S pre-ribosomes.

Its subcellular location is the nucleus. The protein localises to the nucleolus. Its function is as follows. May be involved in rRNA-processing and ribosome biosynthesis. The sequence is that of Ribosome biogenesis protein ENP2 (ENP2) from Saccharomyces cerevisiae (strain ATCC 204508 / S288c) (Baker's yeast).